Consider the following 303-residue polypeptide: Diaminopimelate epimerase (303 aa).

Asparagine 14 lines the substrate pocket. Residues 60–74 are compositionally biased toward low complexity; the sequence is PVSSAGATADAAAGR. Residues 60 to 86 are disordered; sequence PVSSAGATADAAAGRPPQPSAGRPPQP. A compositionally biased stretch (pro residues) spans 75 to 86; the sequence is PPQPSAGRPPQP. Residue asparagine 97 participates in substrate binding. Cysteine 106 (proton donor) is an active-site residue. Residues 107–108, asparagine 178, asparagine 209, and 227–228 each bind substrate; these read GN and ER. The active-site Proton acceptor is the cysteine 236. Substrate is bound at residue 237-238; sequence GS.

The protein belongs to the diaminopimelate epimerase family. As to quaternary structure, homodimer.

The protein localises to the cytoplasm. The enzyme catalyses (2S,6S)-2,6-diaminopimelate = meso-2,6-diaminopimelate. It participates in amino-acid biosynthesis; L-lysine biosynthesis via DAP pathway; DL-2,6-diaminopimelate from LL-2,6-diaminopimelate: step 1/1. Functionally, catalyzes the stereoinversion of LL-2,6-diaminopimelate (L,L-DAP) to meso-diaminopimelate (meso-DAP), a precursor of L-lysine and an essential component of the bacterial peptidoglycan. The sequence is that of Diaminopimelate epimerase from Acidothermus cellulolyticus (strain ATCC 43068 / DSM 8971 / 11B).